The primary structure comprises 838 residues: Probable beta-glucosidase K (838 aa).

A glycan (N-linked (GlcNAc...) asparagine) is linked at Asn-19. Asp-232 is a catalytic residue. 2 N-linked (GlcNAc...) asparagine glycosylation sites follow: Asn-324 and Asn-489. The PA14 domain occupies 405–564; the sequence is EGQPGLRMRF…DPELAIARAV (160 aa).

The protein belongs to the glycosyl hydrolase 3 family.

The protein resides in the secreted. The enzyme catalyses Hydrolysis of terminal, non-reducing beta-D-glucosyl residues with release of beta-D-glucose.. It participates in glycan metabolism; cellulose degradation. Functionally, beta-glucosidases are one of a number of cellulolytic enzymes involved in the degradation of cellulosic biomass. Catalyzes the last step releasing glucose from the inhibitory cellobiose. This chain is Probable beta-glucosidase K (bglK), found in Emericella nidulans (strain FGSC A4 / ATCC 38163 / CBS 112.46 / NRRL 194 / M139) (Aspergillus nidulans).